Reading from the N-terminus, the 177-residue chain is MPNQVVEILSAEEIRRTLTRLASQVIEKTGDLSQLVLIGIYTRGVPLAHLLANQIEMLEKIKVAVGAIDVTFYRDDLDRIKTRTPAKTKIPFDLTGKTVVLVDDVIYKGRTVRAALNAVTEYGRPSVIRLLVLVDRGHRELPIHPDYTGKKLPTASEEQVKVYLQPVDGRDQVELLK.

Residues 99–111 (VVLVDDVIYKGRT) carry the PRPP-binding motif.

It belongs to the purine/pyrimidine phosphoribosyltransferase family. PyrR subfamily.

It carries out the reaction UMP + diphosphate = 5-phospho-alpha-D-ribose 1-diphosphate + uracil. Its function is as follows. Regulates the transcription of the pyrimidine nucleotide (pyr) operon in response to exogenous pyrimidines. In terms of biological role, also displays a weak uracil phosphoribosyltransferase activity which is not physiologically significant. The sequence is that of Bifunctional protein PyrR from Gloeothece citriformis (strain PCC 7424) (Cyanothece sp. (strain PCC 7424)).